Reading from the N-terminus, the 327-residue chain is Probable cell division protein WhiA (327 aa).

Residues 277–310 constitute a DNA-binding region (H-T-H motif); sequence EELGRLADPPMTKDAVAGRIRRLLSMADRKAKQD. Positions 304 to 327 are disordered; that stretch reads DRKAKQDGIPDTESAVTPDLLEDA.

This sequence belongs to the WhiA family.

Its function is as follows. Involved in cell division and chromosome segregation. The polypeptide is Probable cell division protein WhiA (Mycolicibacterium vanbaalenii (strain DSM 7251 / JCM 13017 / BCRC 16820 / KCTC 9966 / NRRL B-24157 / PYR-1) (Mycobacterium vanbaalenii)).